A 70-amino-acid polypeptide reads, in one-letter code: Small ribosomal subunit protein bS21B (70 aa).

This sequence belongs to the bacterial ribosomal protein bS21 family.

This is Small ribosomal subunit protein bS21B from Burkholderia thailandensis (strain ATCC 700388 / DSM 13276 / CCUG 48851 / CIP 106301 / E264).